A 245-amino-acid chain; its full sequence is 8-amino-3,8-dideoxy-manno-octulosonate cytidylyltransferase (245 aa).

It belongs to the KdsB family.

The protein resides in the cytoplasm. It carries out the reaction 8-amino-3,8-dideoxy-alpha-D-manno-octulosonate + CTP = CMP-8-amino-3,8-dideoxy-alpha-D-manno-oct-2-ulosonate + diphosphate. It functions in the pathway bacterial outer membrane biogenesis; lipopolysaccharide biosynthesis. Activates KDO8N (a required 8-carbon sugar) for incorporation into bacterial lipopolysaccharide in the Shewanella genus. The polypeptide is 8-amino-3,8-dideoxy-manno-octulosonate cytidylyltransferase (Shewanella baltica (strain OS223)).